The chain runs to 659 residues: Putative cysteine-rich receptor-like protein kinase 39 (659 aa).

An N-terminal signal peptide occupies residues 1 to 27 (MGKYSVLMIFIASSLLIVLQNVEIVNA). Gnk2-homologous domains lie at 28–134 (VGCT…NHST) and 142–253 (PSVR…LYAF). Residues 28 to 289 (VGCTGSFFNG…KKKGRSIGYG (262 aa)) are Extracellular-facing. N-linked (GlcNAc...) asparagine glycosylation is found at Asn-38, Asn-64, Asn-122, Asn-131, Asn-157, Asn-170, Asn-259, and Asn-274. A helical transmembrane segment spans residues 290–310 (GIIAIVVVLTFINILVFIGYI). Residues 311–659 (KVYGRRKESY…DDVFTELSCR (349 aa)) are Cytoplasmic-facing. A Protein kinase domain is found at 353–619 (FSSENTLGQG…PTMSSVIIWL (267 aa)). Residues 359 to 367 (LGQGGFGTV) and Lys-381 contribute to the ATP site. Tyr-426 carries the post-translational modification Phosphotyrosine. Residue Asp-478 is the Proton acceptor of the active site. Residue Ser-482 is modified to Phosphoserine. Phosphothreonine is present on Thr-518. Phosphotyrosine is present on Tyr-526.

Belongs to the protein kinase superfamily. Ser/Thr protein kinase family. CRK subfamily.

Its subcellular location is the membrane. The enzyme catalyses L-seryl-[protein] + ATP = O-phospho-L-seryl-[protein] + ADP + H(+). It catalyses the reaction L-threonyl-[protein] + ATP = O-phospho-L-threonyl-[protein] + ADP + H(+). This is Putative cysteine-rich receptor-like protein kinase 39 (CRK39) from Arabidopsis thaliana (Mouse-ear cress).